Here is a 112-residue protein sequence, read N- to C-terminus: Osmotically-inducible putative lipoprotein OsmE (112 aa).

Residues 1–20 form the signal peptide; it reads MNKNMAGILSAAAVLTMLAG. Residue Cys-21 is the site of N-palmitoyl cysteine attachment. Cys-21 carries the S-diacylglycerol cysteine lipid modification.

The protein localises to the cell inner membrane. The protein is Osmotically-inducible putative lipoprotein OsmE (osmE) of Escherichia coli O157:H7.